The primary structure comprises 473 residues: Bifunctional NAD(P)H-hydrate repair enzyme Nnr (473 aa).

The interval 1-211 (MRHYYSVDTI…AHTDVLGFEA (211 aa)) is NAD(P)H-hydrate epimerase. A YjeF N-terminal domain is found at 10–205 (IRAAEAPLLA…DIGLDLAHTD (196 aa)). The NADPHX 1; for epimerase activity stretch occupies residues 62–66 (DNGGD). K(+) is bound by residues Asn63 and Asp119. Positions 123–129 (GISGSGP) are NADPHX 1; for epimerase activity. (6S)-NADPHX is bound at residue Asp152. Ser155 provides a ligand contact to K(+). In terms of domain architecture, YjeF C-terminal spans 210 to 473 (EATDVAARWP…GHIRAALAAL (264 aa)). Residues 211–473 (ATDVAARWPV…GHIRAALAAL (263 aa)) form an ADP-dependent (S)-NAD(P)H-hydrate dehydratase region. Gly298 provides a ligand contact to (6S)-NADPHX. Positions 348–354 (HAGEFAR) are NADPHX 2; for dehydratase activity. ADP is bound by residues 382–386 (KGNVT) and 402–411 (QSWAATAGSG). Residue Asp412 coordinates (6S)-NADPHX.

It in the N-terminal section; belongs to the NnrE/AIBP family. In the C-terminal section; belongs to the NnrD/CARKD family. The cofactor is K(+).

It catalyses the reaction (6S)-NADHX + ADP = AMP + phosphate + NADH + H(+). It carries out the reaction (6S)-NADPHX + ADP = AMP + phosphate + NADPH + H(+). The catalysed reaction is (6R)-NADHX = (6S)-NADHX. The enzyme catalyses (6R)-NADPHX = (6S)-NADPHX. Functionally, bifunctional enzyme that catalyzes the epimerization of the S- and R-forms of NAD(P)HX and the dehydration of the S-form of NAD(P)HX at the expense of ADP, which is converted to AMP. This allows the repair of both epimers of NAD(P)HX, a damaged form of NAD(P)H that is a result of enzymatic or heat-dependent hydration. The protein is Bifunctional NAD(P)H-hydrate repair enzyme Nnr (nnr) of Mycobacterium tuberculosis (strain CDC 1551 / Oshkosh).